The following is a 212-amino-acid chain: Nitrile hydratase subunit beta (212 aa).

The protein belongs to the nitrile hydratase subunit beta family. Heterodimer of an alpha and a beta chain.

The catalysed reaction is an aliphatic primary amide = an aliphatic nitrile + H2O. In terms of biological role, NHase catalyzes the hydration of various nitrile compounds to the corresponding amides. The polypeptide is Nitrile hydratase subunit beta (nthB) (Rhodococcus erythropolis (Arthrobacter picolinophilus)).